The primary structure comprises 302 residues: tRNA-cytidine(32) 2-sulfurtransferase (302 aa).

A PP-loop motif motif is present at residues 45–50 (SGGKDS). [4Fe-4S] cluster is bound by residues cysteine 120, cysteine 123, and cysteine 211.

This sequence belongs to the TtcA family. In terms of assembly, homodimer. Requires Mg(2+) as cofactor. [4Fe-4S] cluster is required as a cofactor.

It is found in the cytoplasm. The enzyme catalyses cytidine(32) in tRNA + S-sulfanyl-L-cysteinyl-[cysteine desulfurase] + AH2 + ATP = 2-thiocytidine(32) in tRNA + L-cysteinyl-[cysteine desulfurase] + A + AMP + diphosphate + H(+). The protein operates within tRNA modification. In terms of biological role, catalyzes the ATP-dependent 2-thiolation of cytidine in position 32 of tRNA, to form 2-thiocytidine (s(2)C32). The sulfur atoms are provided by the cysteine/cysteine desulfurase (IscS) system. This chain is tRNA-cytidine(32) 2-sulfurtransferase, found in Aeromonas hydrophila subsp. hydrophila (strain ATCC 7966 / DSM 30187 / BCRC 13018 / CCUG 14551 / JCM 1027 / KCTC 2358 / NCIMB 9240 / NCTC 8049).